The primary structure comprises 621 residues: UvrABC system protein C (621 aa).

Residues 13–92 (EKPGVYMMRN…IKENRPKYNV (80 aa)) form the GIY-YIG domain. The UVR domain occupies 205 to 240 (DELVRKIEEKMKAAAISMDFENAARYRDQIIALNNI).

This sequence belongs to the UvrC family. As to quaternary structure, interacts with UvrB in an incision complex.

The protein localises to the cytoplasm. The UvrABC repair system catalyzes the recognition and processing of DNA lesions. UvrC both incises the 5' and 3' sides of the lesion. The N-terminal half is responsible for the 3' incision and the C-terminal half is responsible for the 5' incision. This Alkaliphilus oremlandii (strain OhILAs) (Clostridium oremlandii (strain OhILAs)) protein is UvrABC system protein C.